Reading from the N-terminus, the 185-residue chain is Casparian strip membrane protein 1 (185 aa).

Over 1-32 (MKAVSIEAGERSKAKRVHGVNRGISVFDLVLR) the chain is Cytoplasmic. Residues 33-53 (IVALVGTLASAVAMGTAGQAL) form a helical membrane-spanning segment. At 54–73 (SFSTQIVNFEAQYDDIDAFK) the chain is on the extracellular side. Residues 74–94 (FFVVSNSITCVYLALSIPISI) traverse the membrane as a helical segment. The Cytoplasmic portion of the chain corresponds to 95 to 106 (FHIIRSRAGKSR). Residues 107–127 (VLLIVLDAIMLVFLTSGASAA) form a helical membrane-spanning segment. Over 128-160 (AAIVYLAHNGNTSTNWFSICQQYTDFCQRSAGS) the chain is Extracellular. Asparagine 138 is a glycosylation site (N-linked (GlcNAc...) asparagine). A helical membrane pass occupies residues 161 to 181 (LIGSFGAMALMVLLIILSSIA). Residues 182–185 (LSRR) are Cytoplasmic-facing.

This sequence belongs to the Casparian strip membrane proteins (CASP) family. In terms of assembly, homodimer and heterodimers.

It localises to the cell membrane. Regulates membrane-cell wall junctions and localized cell wall deposition. Required for establishment of the Casparian strip membrane domain (CSD) and the subsequent formation of Casparian strips, a cell wall modification of the root endodermis that determines an apoplastic barrier between the intraorganismal apoplasm and the extraorganismal apoplasm and prevents lateral diffusion. This chain is Casparian strip membrane protein 1, found in Solanum demissum (Wild potato).